We begin with the raw amino-acid sequence, 154 residues long: Large ribosomal subunit protein uL30 (154 aa).

Residues 114 to 146 (PTLRLHPPRGGHDGVKHPVKEGGQLGKHDTEGI) are disordered. Basic and acidic residues predominate over residues 123 to 144 (GGHDGVKHPVKEGGQLGKHDTE).

The protein belongs to the universal ribosomal protein uL30 family. As to quaternary structure, part of the 50S ribosomal subunit. Binds 5S rRNA.

Its function is as follows. This is one of 5 proteins that mediate the attachment of the 5S rRNA onto the large ribosomal subunit, stabilizing the orientation of adjacent RNA domains. In Haloarcula marismortui (strain ATCC 43049 / DSM 3752 / JCM 8966 / VKM B-1809) (Halobacterium marismortui), this protein is Large ribosomal subunit protein uL30.